Reading from the N-terminus, the 322-residue chain is Crystallin J1A (322 aa).

The protein belongs to the ADP-ribosylglycohydrolase family. J1 crystallin subfamily. As to expression, expressed in the rhopalia. Present in both the large and small eyes.

The sequence is that of Crystallin J1A from Tripedalia cystophora (Jellyfish).